A 307-amino-acid chain; its full sequence is PCP degradation transcriptional activation protein (307 aa).

The 58-residue stretch at 6-63 folds into the HTH lysR-type domain; sequence LPLGHLMVFDALYRHGSAGKAAHALSMPQPTLSRWLAQLRTHFDDPLFVRTRSGMEPT. Residues 23–42 constitute a DNA-binding region (H-T-H motif); sequence AGKAAHALSMPQPTLSRWLA.

The protein belongs to the LysR transcriptional regulatory family.

In terms of biological role, transcriptional activator for the pcpA, pcpB and pcpE genes for pentachlorophenol (PCP) degradation. Essential for PCP degradation. This Sphingobium chlorophenolicum protein is PCP degradation transcriptional activation protein (pcpR).